We begin with the raw amino-acid sequence, 255 residues long: uncharacterized protein (255 aa).

The short motif at serine 253–isoleucine 255 is the Microbody targeting signal element.

The protein belongs to the enoyl-CoA hydratase/isomerase family.

It localises to the peroxisome. This is an uncharacterized protein from Caenorhabditis elegans.